The sequence spans 299 residues: Acetyl-coenzyme A carboxylase carboxyl transferase subunit beta (299 aa).

The CoA carboxyltransferase N-terminal domain maps to 25–294; sequence VWTKCTSCEQ…PFVEPELIQE (270 aa). Zn(2+)-binding residues include Cys29, Cys32, Cys48, and Cys51. A C4-type zinc finger spans residues 29 to 51; that stretch reads CTSCEQVLYRDELKRHLEVCPKC.

The protein belongs to the AccD/PCCB family. As to quaternary structure, acetyl-CoA carboxylase is a heterohexamer composed of biotin carboxyl carrier protein (AccB), biotin carboxylase (AccC) and two subunits each of ACCase subunit alpha (AccA) and ACCase subunit beta (AccD). Zn(2+) serves as cofactor.

It localises to the cytoplasm. The enzyme catalyses N(6)-carboxybiotinyl-L-lysyl-[protein] + acetyl-CoA = N(6)-biotinyl-L-lysyl-[protein] + malonyl-CoA. It participates in lipid metabolism; malonyl-CoA biosynthesis; malonyl-CoA from acetyl-CoA: step 1/1. In terms of biological role, component of the acetyl coenzyme A carboxylase (ACC) complex. Biotin carboxylase (BC) catalyzes the carboxylation of biotin on its carrier protein (BCCP) and then the CO(2) group is transferred by the transcarboxylase to acetyl-CoA to form malonyl-CoA. This chain is Acetyl-coenzyme A carboxylase carboxyl transferase subunit beta, found in Histophilus somni (strain 129Pt) (Haemophilus somnus).